Here is a 406-residue protein sequence, read N- to C-terminus: Argininosuccinate synthase (406 aa).

Residues 10-18 (AYSGGLDTS) and A37 contribute to the ATP site. L-citrulline contacts are provided by Y88 and S93. G118 serves as a coordination point for ATP. L-aspartate-binding residues include T120, N124, and D125. Residue N124 participates in L-citrulline binding. 5 residues coordinate L-citrulline: R128, S179, S188, E264, and Y276.

The protein belongs to the argininosuccinate synthase family. Type 1 subfamily. Homotetramer.

The protein resides in the cytoplasm. The catalysed reaction is L-citrulline + L-aspartate + ATP = 2-(N(omega)-L-arginino)succinate + AMP + diphosphate + H(+). The protein operates within amino-acid biosynthesis; L-arginine biosynthesis; L-arginine from L-ornithine and carbamoyl phosphate: step 2/3. This chain is Argininosuccinate synthase, found in Dinoroseobacter shibae (strain DSM 16493 / NCIMB 14021 / DFL 12).